Consider the following 344-residue polypeptide: FCS-Like Zinc finger 10 (344 aa).

The FLZ-type zinc finger occupies 270-314 (DFLSFCYGCSKKLGMGEDIYMYSGYKAFCSSECRSKEIDLDEEME). Positions 309 to 320 (LDEEMEDGDEEE) are enriched in acidic residues. The disordered stretch occupies residues 309–344 (LDEEMEDGDEEEAIKSVSSSDKESKKKSNGVFFTVG).

Belongs to the FLZ family. In terms of assembly, interacts with KIN10 and KIN11 via its FLZ-type zinc finger domain. Interacts with KINB1, KINB2 and KINB3 via its N-terminal part. Forms homodimer and heterodimer with FLZ2 and FLZ12 in vitro. In terms of tissue distribution, early expressed in hypocotyl and cotyledon and preferentially in the stelar region of the shoot and root. Later expressed in root-shoot junction, lateral root, old or senescing leaves and in pistil and pollen of flower buds or open flowers.

It is found in the cytoplasm. The protein localises to the nucleus. The protein resides in the endoplasmic reticulum. May act as an adapter to facilitate the interaction of SnRK1 complex with effector proteins, conferring tissue- and stimulus-type specific differences in the SnRK1 regulation pathway. Negatively regulates KIN10 leading to a repression of the SnRK1 signaling pathway. The chain is FCS-Like Zinc finger 10 from Arabidopsis thaliana (Mouse-ear cress).